We begin with the raw amino-acid sequence, 256 residues long: Hydroxyethylthiazole kinase (256 aa).

M38 lines the substrate pocket. Residues R114 and T159 each coordinate ATP. Substrate is bound at residue G186.

Belongs to the Thz kinase family. It depends on Mg(2+) as a cofactor.

The catalysed reaction is 5-(2-hydroxyethyl)-4-methylthiazole + ATP = 4-methyl-5-(2-phosphooxyethyl)-thiazole + ADP + H(+). It functions in the pathway cofactor biosynthesis; thiamine diphosphate biosynthesis; 4-methyl-5-(2-phosphoethyl)-thiazole from 5-(2-hydroxyethyl)-4-methylthiazole: step 1/1. In terms of biological role, catalyzes the phosphorylation of the hydroxyl group of 4-methyl-5-beta-hydroxyethylthiazole (THZ). This Streptococcus agalactiae serotype III (strain NEM316) protein is Hydroxyethylthiazole kinase.